Reading from the N-terminus, the 212-residue chain is MFKRKTAWFSDSVEKEVISFWVSEGGDISSWKTAGYLFSDDASSEDTKRIYGSEDYVKNRATVFHSSFLLACQPRQSVTSVPIGHYVLPPDFVQNEMKAIIGRFIWEKDEQVICEEQINPEVPKDILSGETEDHALRERSSQDDYQTVTSQSKVCSCCEMRQYPVNNMISGYVHIDQMRKYSGELKDFLPSLHGHDVSRSNDPTPPFHRKAV.

It belongs to the TERB2 family. Component of the MAJIN-TERB1-TERB2 complex.

Functionally, meiosis-specific telomere-associated protein involved in meiotic telomere attachment to the nucleus inner membrane, a crucial step for homologous pairing and synapsis. Component of the MAJIN-TERB1-TERB2 complex, which promotes telomere cap exchange by mediating attachment of telomeric DNA to the inner nuclear membrane and replacement of the protective cap of telomeric chromosomes: in early meiosis, the MAJIN-TERB1-TERB2 complex associates with telomeric DNA and the shelterin/telosome complex. During prophase, the complex matures and promotes release of the shelterin/telosome complex from telomeric DNA. The protein is Telomere repeats-binding bouquet formation protein 2 of Danio rerio (Zebrafish).